The chain runs to 315 residues: Probable cell division protein WhiA (315 aa).

Positions 277-311 (SLQELGAMMPSGQISKSGVNHRLRKLNQIAEGYQQ) form a DNA-binding region, H-T-H motif.

This sequence belongs to the WhiA family.

Its function is as follows. Involved in cell division and chromosome segregation. The chain is Probable cell division protein WhiA from Lacticaseibacillus paracasei (strain ATCC 334 / BCRC 17002 / CCUG 31169 / CIP 107868 / KCTC 3260 / NRRL B-441) (Lactobacillus paracasei).